The primary structure comprises 204 residues: Probable nicotinate-nucleotide adenylyltransferase (204 aa).

The protein belongs to the NadD family.

The catalysed reaction is nicotinate beta-D-ribonucleotide + ATP + H(+) = deamido-NAD(+) + diphosphate. Its pathway is cofactor biosynthesis; NAD(+) biosynthesis; deamido-NAD(+) from nicotinate D-ribonucleotide: step 1/1. Functionally, catalyzes the reversible adenylation of nicotinate mononucleotide (NaMN) to nicotinic acid adenine dinucleotide (NaAD). In Dehalococcoides mccartyi (strain CBDB1), this protein is Probable nicotinate-nucleotide adenylyltransferase.